Reading from the N-terminus, the 53-residue chain is UPF0391 membrane protein BPSS2216 (53 aa).

Transmembrane regions (helical) follow at residues 5 to 25 (ALVF…GIAA) and 30 to 50 (IAKI…VLGV).

The protein belongs to the UPF0391 family.

Its subcellular location is the cell membrane. The sequence is that of UPF0391 membrane protein BPSS2216 from Burkholderia pseudomallei (strain K96243).